A 228-amino-acid chain; its full sequence is Sodium channel regulatory subunit beta-4 (228 aa).

Residues methionine 1–serine 30 form the signal peptide. The Ig-like C2-type domain maps to leucine 31–phenylalanine 148. Over leucine 31 to threonine 161 the chain is Extracellular. Asparagine 45, asparagine 71, asparagine 113, and asparagine 142 each carry an N-linked (GlcNAc...) asparagine glycan. Residues cysteine 53 and cysteine 131 are joined by a disulfide bond. A helical membrane pass occupies residues valine 162–leucine 182. The Cytoplasmic portion of the chain corresponds to leucine 183–valine 228. A disordered region spans residues lysine 199–valine 228. Positions valine 203 to asparagine 213 are enriched in polar residues. Basic and acidic residues predominate over residues lysine 219–valine 228.

This sequence belongs to the sodium channel auxiliary subunit SCN4B (TC 8.A.17) family. As to quaternary structure, a voltage-gated sodium (Nav) channel consists of an ion-conducting pore-forming alpha subunit functional on its own that is regulated by one or more beta subunits. The beta subunit SCN4B is disulfide-linked to the pore-forming alpha subunit. Interacts with SCN1A; regulatory subunit of SCN1A/Nav1.1. Interacts with SCN2A; regulatory subunit of SCN2A/Nav1.2. Contains an interchain disulfide bond with SCN2A. In terms of tissue distribution, expressed at a high level in dorsal root ganglia, at a lower level in brain, spinal cord, skeletal muscle and heart.

Its subcellular location is the cell membrane. Its function is as follows. Regulatory subunit of multiple voltage-gated sodium (Nav) channels directly mediating the depolarization of excitable membranes. Navs, also called VGSCs (voltage-gated sodium channels) or VDSCs (voltage-dependent sodium channels), operate by switching between closed and open conformations depending on the voltage difference across the membrane. In the open conformation they allow Na(+) ions to selectively pass through the pore, along their electrochemical gradient. The influx of Na+ ions provokes membrane depolarization, initiating the propagation of electrical signals throughout cells and tissues. The accessory beta subunits participate in localization and functional modulation of the Nav channels. Modulates the activity of SCN1A/Nav1.1. Modulates the activity of SCN2A/Nav1.2. The protein is Sodium channel regulatory subunit beta-4 of Rattus norvegicus (Rat).